We begin with the raw amino-acid sequence, 314 residues long: Putative peptide transport system permease protein BRA1092/BS1330_II1084 (314 aa).

6 helical membrane-spanning segments follow: residues 12-32 (AIPV…LLPG), 101-121 (LALL…VVAA), 135-155 (LALL…VILF), 177-197 (WLRS…GYLA), 237-257 (VSVL…SVVI), and 286-306 (MLFL…LYTI). The ABC transmembrane type-1 domain occupies 95–304 (LPVTISLALL…AINVLVDILY (210 aa)).

This sequence belongs to the binding-protein-dependent transport system permease family. In terms of assembly, the complex is composed of two ATP-binding proteins (BRA1094), two transmembrane proteins (BRA1092 and BRA1093) and a solute-binding protein (BRA1090).

The protein resides in the cell inner membrane. Functionally, probably part of an ABC transporter complex that could be involved in peptide import. Probably responsible for the translocation of the substrate across the membrane. In Brucella suis biovar 1 (strain 1330), this protein is Putative peptide transport system permease protein BRA1092/BS1330_II1084.